A 266-amino-acid chain; its full sequence is Vitamin B12-binding protein (266 aa).

Positions 1 to 22 (MAKSLFRALVALSFLAPLWLNA) are cleaved as a signal peptide. The region spanning 25–266 (RVITLSPANT…QLCNALSQVD (242 aa)) is the Fe/B12 periplasmic-binding domain. Cyanocob(III)alamin-binding positions include Y50 and 242–246 (DWFER). Cysteines 183 and 259 form a disulfide.

Belongs to the BtuF family. In terms of assembly, the complex is composed of two ATP-binding proteins (BtuD), two transmembrane proteins (BtuC) and a solute-binding protein (BtuF).

It localises to the periplasm. Part of the ABC transporter complex BtuCDF involved in vitamin B12 import. Binds vitamin B12 and delivers it to the periplasmic surface of BtuC. This chain is Vitamin B12-binding protein (btuF), found in Escherichia coli (strain K12).